The sequence spans 124 residues: Large ribosomal subunit protein bL17 (124 aa).

This sequence belongs to the bacterial ribosomal protein bL17 family. As to quaternary structure, part of the 50S ribosomal subunit. Contacts protein L32.

The protein is Large ribosomal subunit protein bL17 of Mycoplasma pneumoniae (strain ATCC 29342 / M129 / Subtype 1) (Mycoplasmoides pneumoniae).